A 197-amino-acid polypeptide reads, in one-letter code: Holliday junction branch migration complex subunit RuvA (197 aa).

A domain I region spans residues 1–64 (MIALLRGLVV…EDVLALYGFL (64 aa)). Residues 65–143 (TQDEKALFEK…AATGEEPGAP (79 aa)) form a domain II region. Positions 144–153 (AAEALSPIDQ) are flexible linker. The segment at 153 to 197 (QDVLSALLNLGCARPQAEAAVRKAKAAGASLDFEPLFRRALELVR) is domain III.

The protein belongs to the RuvA family. In terms of assembly, homotetramer. Forms an RuvA(8)-RuvB(12)-Holliday junction (HJ) complex. HJ DNA is sandwiched between 2 RuvA tetramers; dsDNA enters through RuvA and exits via RuvB. An RuvB hexamer assembles on each DNA strand where it exits the tetramer. Each RuvB hexamer is contacted by two RuvA subunits (via domain III) on 2 adjacent RuvB subunits; this complex drives branch migration. In the full resolvosome a probable DNA-RuvA(4)-RuvB(12)-RuvC(2) complex forms which resolves the HJ.

It is found in the cytoplasm. The RuvA-RuvB-RuvC complex processes Holliday junction (HJ) DNA during genetic recombination and DNA repair, while the RuvA-RuvB complex plays an important role in the rescue of blocked DNA replication forks via replication fork reversal (RFR). RuvA specifically binds to HJ cruciform DNA, conferring on it an open structure. The RuvB hexamer acts as an ATP-dependent pump, pulling dsDNA into and through the RuvAB complex. HJ branch migration allows RuvC to scan DNA until it finds its consensus sequence, where it cleaves and resolves the cruciform DNA. The sequence is that of Holliday junction branch migration complex subunit RuvA from Solibacter usitatus (strain Ellin6076).